The following is a 652-amino-acid chain: Carboxypeptidase S1 homolog A (652 aa).

The N-terminal stretch at 1–19 is a signal peptide; sequence MRLAASIAVALPVIGAASA. The cysteines at positions 50 and 121 are disulfide-linked. N-linked (GlcNAc...) asparagine glycosylation is found at N77, N132, N161, N168, N184, and N202. Residue S238 is part of the active site. Residues N260, N299, N347, and N410 are each glycosylated (N-linked (GlcNAc...) asparagine). Cystine bridges form between C325/C361 and C332/C354. D458 is a catalytic residue. C461 serves as a coordination point for substrate. N-linked (GlcNAc...) asparagine glycosylation is found at N474, N492, and N505. H516 is an active-site residue. Position 517 (E517) interacts with substrate. The N-linked (GlcNAc...) asparagine glycan is linked to N594. The tract at residues 608 to 628 is disordered; sequence AASKGNPPPTTTSSPTASPTA. Over residues 618–628 the composition is skewed to low complexity; sequence TTSSPTASPTA. G629 carries GPI-anchor amidated glycine lipidation. Positions 630-652 are cleaved as a propeptide — removed in mature form; it reads SAMLKAPVAMLAISALTVLAFYL.

This sequence belongs to the peptidase S10 family.

It is found in the cell membrane. The catalysed reaction is Preferential release of a C-terminal arginine or lysine residue.. Extracellular serine carboxypeptidase that contributes to pathogenicity. The polypeptide is Carboxypeptidase S1 homolog A (SCPA) (Trichophyton verrucosum (strain HKI 0517)).